A 246-amino-acid polypeptide reads, in one-letter code: Small ribosomal subunit protein uS2c (246 aa).

This sequence belongs to the universal ribosomal protein uS2 family.

The protein localises to the plastid. The protein resides in the chloroplast. The sequence is that of Small ribosomal subunit protein uS2c (rps2) from Pelargonium hortorum (Common geranium).